Reading from the N-terminus, the 360-residue chain is MDLSFTTKSVKINGQNHRILLQNENGPCALLALANILILSPDHTRFSNELIRLVNKGSQISLKELIEVLADIALQVTDKPSTDISELLSLLPRLHEGLNINPEFNGSFENTKEMSIFRLFNVDVVHGWVINSFINENIDEKLSHYSYESAQRILTQAADINCGISQDENSDEVLRDAMHLGLFLNESPTQLTAFGLLRLREKLLHNKFSILFRNDHFSTLFKYEDRLYTLVTDFGYKNCKDIVWQSLDSVDGSCDAFFAGNFSAAEVNGQQLSTDIERDFGTGNLLLEEIQQIENDKELAKQLQEQEQERVTKFEAKRKIHSHKKNSEIHAPVKKDKFKRRSSLLNAKASEKEKSECVVM.

Cysteine 28 (nucleophile) is an active-site residue. Residue histidine 216 is the Proton acceptor of the active site. The interval 317–360 is disordered; sequence KRKIHSHKKNSEIHAPVKKDKFKRRSSLLNAKASEKEKSECVVM. 2 stretches are compositionally biased toward basic and acidic residues: residues 325 to 335 and 349 to 360; these read KNSEIHAPVKK and ASEKEKSECVVM.

This sequence belongs to the MINDY deubiquitinase family. FAM63 subfamily.

The protein localises to the cytoplasm. The catalysed reaction is Thiol-dependent hydrolysis of ester, thioester, amide, peptide and isopeptide bonds formed by the C-terminal Gly of ubiquitin (a 76-residue protein attached to proteins as an intracellular targeting signal).. Functionally, hydrolase that can specifically remove 'Lys-48'-linked conjugated ubiquitin from proteins. Has endodeubiquitinase activity. This is Ubiquitin carboxyl-terminal hydrolase MIY1 from Saccharomyces cerevisiae (strain ATCC 204508 / S288c) (Baker's yeast).